The chain runs to 338 residues: Phenylalanine--tRNA ligase alpha subunit (338 aa).

Glutamate 259 is a Mg(2+) binding site.

Belongs to the class-II aminoacyl-tRNA synthetase family. Phe-tRNA synthetase alpha subunit type 1 subfamily. In terms of assembly, tetramer of two alpha and two beta subunits. Mg(2+) is required as a cofactor.

Its subcellular location is the cytoplasm. The enzyme catalyses tRNA(Phe) + L-phenylalanine + ATP = L-phenylalanyl-tRNA(Phe) + AMP + diphosphate + H(+). This chain is Phenylalanine--tRNA ligase alpha subunit, found in Herminiimonas arsenicoxydans.